Reading from the N-terminus, the 50-residue chain is Small ribosomal subunit protein eS31 (50 aa).

4 residues coordinate Zn(2+): C22, C25, C40, and C43. Residues 22–43 (CPRCGPGVFMADHGDRWACGKC) form a C4-type zinc finger.

It belongs to the eukaryotic ribosomal protein eS31 family. Part of the 30S ribosomal subunit. It depends on Zn(2+) as a cofactor.

In Pyrococcus furiosus (strain ATCC 43587 / DSM 3638 / JCM 8422 / Vc1), this protein is Small ribosomal subunit protein eS31.